Here is a 1029-residue protein sequence, read N- to C-terminus: MVFDSEYDLGYPVYGAQFLSDGMLLVAGGGGVGVMIPNKLTALRVNFEKKKVLKRYREITLDSQDDSPSNLGVAQNMILMGCNEGYDKISSTGENHHIRKFVFENDHLKFIGAIDFDGSTDPEVYTKLICMSKDGTIAAIASSKLPTVIRIIDPIDLTEKYEIETGRDVRDIHFSPDGKLLVYITATSLEVVSVVTGRFLFRKTDFNKATDLARVKFINDDDFVLASGFKDKAGIALTTFRIRNTNPTILSSKKVFKDYKKITAMDVDPKGQLIALTTDDNSLALLSVKKLNVIKLFKQVHKDTITRVTVSPGGQYVATGSTDKTVHIFKISPDAMGGSNLWKSLLRFLFNVMKLAVVVIWAHLFYKYDLHHKLYDVTKVQLEKRSIEFPSFLDGILGTTTTRSTIIEGDIVSVVTDTAPALTSSVFSEDNKEYAKVEETTPSNSWSSVSESYWPSEVSNDIESVQENFDDIENKILENEDVVMKNDAIETEDESVGFDIDDTIKPIAPIDIDLELDDPLASTSVDTSEVLSSQVPVQLETLSGQSEIIDDKPEHLDEEVSEGFLGDHSKANLETEIENASTSISIEESTNSHSTFIESSSSLEEGRNTTSESSREISSETSIIKEDMLYPTENVSEQSATDKVNKNQSIDKIDVSSSSSIPTSSEGSSNSIVGDEAQMHISSLSSIETELSSSSIMINEESTIRNADSVVDENHSESKLPTEAKTSIVGSIDNENIDSTELNNLEEAVKTSSNESSLSQVTEELVKNNERVSNQSLSTVSTEHTEMKESSNLTEKKPESNSPESNLSESSLQTHDFSQISDTERNIVSSSAFVTDLPSEEASVNPGNTEGTIVNASLVDSQSSNSSVKTVETNVSQDEQTSQNETLSVGAATIDVIQGSYTSVSDSLDGMNNEEVGNKVHIEDVSNTLEIDSSASALSEQGDNQFSDSTPEVVNVINEFTTTPENETSSPLASSSTTFMTESPSPIAVANEVIENIQQDEQVAQQMEDTNSGSSNFQDTQHNVINDEL.

Residues 1–344 (MVFDSEYDLG…AMGGSNLWKS (344 aa)) lie on the Cytoplasmic side of the membrane. 2 WD repeats span residues 257-296 (KDYK…VIKL) and 300-339 (VHKD…MGGS). Residues 345-365 (LLRFLFNVMKLAVVVIWAHLF) traverse the membrane as a helical; Signal-anchor for type II membrane protein segment. Residues 366-1029 (YKYDLHHKLY…TQHNVINDEL (664 aa)) lie on the Lumenal side of the membrane. A glycan (N-linked (GlcNAc...) asparagine) is linked at N579. Positions 579 to 592 (NASTSISIEESTNS) are enriched in low complexity. Disordered stretches follow at residues 579 to 673 (NAST…NSIV), 710 to 732 (VVDE…VGSI), and 747 to 821 (EAVK…SQIS). The segment covering 593–603 (HSTFIESSSSL) has biased composition (polar residues). Residue N608 is glycosylated (N-linked (GlcNAc...) asparagine). The span at 613–628 (SSREISSETSIIKEDM) shows a compositional bias: basic and acidic residues. Over residues 633–642 (ENVSEQSATD) the composition is skewed to polar residues. N634 and N647 each carry an N-linked (GlcNAc...) asparagine glycan. The segment covering 643 to 654 (KVNKNQSIDKID) has biased composition (basic and acidic residues). Residues 655-672 (VSSSSSIPTSSEGSSNSI) show a composition bias toward low complexity. Over residues 712-722 (DENHSESKLPT) the composition is skewed to basic and acidic residues. N-linked (GlcNAc...) asparagine glycosylation is found at N714, N754, N774, N792, N806, N855, N865, N874, N884, and N966. Polar residues-rich tracts occupy residues 750-762 (KTSS…SQVT) and 771-782 (RVSNQSLSTVST). Basic and acidic residues predominate over residues 783 to 799 (EHTEMKESSNLTEKKPE). A compositionally biased stretch (low complexity) spans 800 to 812 (SNSPESNLSESSL). The span at 858-867 (LVDSQSSNSS) shows a compositional bias: low complexity. Disordered stretches follow at residues 858 to 886 (LVDS…QNET), 963 to 982 (TPEN…FMTE), and 1003 to 1029 (VAQQ…NDEL). Polar residues predominate over residues 868-886 (VKTVETNVSQDEQTSQNET). Residues 1026 to 1029 (NDEL) carry the Prevents secretion from ER motif.

This sequence belongs to the WD repeat SEC12 family.

The protein resides in the endoplasmic reticulum membrane. It localises to the golgi apparatus membrane. Putative guanine nucleotide-exchange factor (GEF) involved in the formation or budding of transport vesicles from the ER. Positive regulator of SAR1 probably through inhibition of the GTPase activation by SEC23. This chain is Putative guanine nucleotide-exchange factor SED4 (SED4), found in Candida glabrata (strain ATCC 2001 / BCRC 20586 / JCM 3761 / NBRC 0622 / NRRL Y-65 / CBS 138) (Yeast).